The sequence spans 402 residues: Multidrug resistance protein MdtH (402 aa).

At Met1 to Lys12 the chain is on the cytoplasmic side. The helical transmembrane segment at Tyr13–Ile33 threads the bilayer. Residues Ser34–Glu98 lie on the Periplasmic side of the membrane. A helical membrane pass occupies residues Pro99 to Phe116. Residues Asp117–Ser138 lie on the Cytoplasmic side of the membrane. The helical transmembrane segment at Leu139–Leu159 threads the bilayer. Topologically, residues Gln160–Arg164 are periplasmic. The helical transmembrane segment at Leu165–Leu185 threads the bilayer. Residues Pro186 to Tyr213 are Cytoplasmic-facing. Residues Val214–Met234 traverse the membrane as a helical segment. Residues Val235–Ser243 are Periplasmic-facing. The helical transmembrane segment at Ala244–Ala264 threads the bilayer. Over Arg265 to Arg276 the chain is Cytoplasmic. Residues Leu277–Leu297 form a helical membrane-spanning segment. Residues Gln298–Gln299 are Periplasmic-facing. The helical transmembrane segment at Leu300–Thr320 threads the bilayer. The Cytoplasmic portion of the chain corresponds to Leu321–Arg339. A helical transmembrane segment spans residues Leu340–Gly360. The Periplasmic portion of the chain corresponds to Lys361 to Glu367. Residues Leu368–Phe388 traverse the membrane as a helical segment. At Ser389–Ala402 the chain is on the cytoplasmic side.

Belongs to the major facilitator superfamily. DHA1 family. MdtH (TC 2.A.1.2.21) subfamily.

It is found in the cell inner membrane. The polypeptide is Multidrug resistance protein MdtH (Shigella flexneri).